The following is a 728-amino-acid chain: 1,4-alpha-glucan branching enzyme GlgB (728 aa).

Residue Asp405 is the Nucleophile of the active site. Glu458 acts as the Proton donor in catalysis.

This sequence belongs to the glycosyl hydrolase 13 family. GlgB subfamily. As to quaternary structure, monomer.

It carries out the reaction Transfers a segment of a (1-&gt;4)-alpha-D-glucan chain to a primary hydroxy group in a similar glucan chain.. It functions in the pathway glycan biosynthesis; glycogen biosynthesis. Functionally, catalyzes the formation of the alpha-1,6-glucosidic linkages in glycogen by scission of a 1,4-alpha-linked oligosaccharide from growing alpha-1,4-glucan chains and the subsequent attachment of the oligosaccharide to the alpha-1,6 position. This is 1,4-alpha-glucan branching enzyme GlgB from Escherichia coli O6:H1 (strain CFT073 / ATCC 700928 / UPEC).